Consider the following 171-residue polypeptide: Large ribosomal subunit protein uL5 (171 aa).

It belongs to the universal ribosomal protein uL5 family. Part of the 50S ribosomal subunit; contacts the 5S rRNA and probably tRNA. Forms a bridge to the 30S subunit in the 70S ribosome.

Functionally, this is one of the proteins that bind and probably mediate the attachment of the 5S RNA into the large ribosomal subunit, where it forms part of the central protuberance. In the 70S ribosome it contacts protein S13 of the 30S subunit (bridge B1b), connecting the 2 subunits; this bridge is implicated in subunit movement. May contact the P site tRNA; the 5S rRNA and some of its associated proteins might help stabilize positioning of ribosome-bound tRNAs. The sequence is that of Large ribosomal subunit protein uL5 from Methanocorpusculum labreanum (strain ATCC 43576 / DSM 4855 / Z).